The following is a 278-amino-acid chain: MDYILIGVILGIVQGISEWIPISSKTQVLIVSSSLLGLSFSVAYSFGLFMEIGTIAAAIIYFRREISGLLKALVRMSSRREDYLLLKFLVIVTIITGLMGVPLYLFVISLPILGLPMTVLGVVLLTDGIIIYLSRKNYISRKGLHDLRLRDIIIVGIAQGLAALPGVSRSGITTSALILLGVKPEEAFKLSFISLIPAALGAIGVTVLFSKHEVSQAVHSVSLSGLLISIVVATFVSIFFINALLRFARTNKVVVLVIILGIIAIISGILSGIAKGFY.

8 helical membrane-spanning segments follow: residues 3-23 (YILI…IPIS), 42-62 (VAYS…IIYF), 88-108 (FLVI…LFVI), 112-132 (ILGL…IIIY), 152-172 (IIIV…RSGI), 190-210 (LSFI…VLFS), 225-245 (GLLI…NALL), and 253-273 (VVVL…LSGI).

This sequence belongs to the UppP family.

Its subcellular location is the cell membrane. It carries out the reaction di-trans,octa-cis-undecaprenyl diphosphate + H2O = di-trans,octa-cis-undecaprenyl phosphate + phosphate + H(+). Functionally, catalyzes the dephosphorylation of undecaprenyl diphosphate (UPP). The sequence is that of Undecaprenyl-diphosphatase from Saccharolobus islandicus (strain M.14.25 / Kamchatka #1) (Sulfolobus islandicus).